A 49-amino-acid chain; its full sequence is Osteocalcin (49 aa).

Gln-1 bears the Pyrrolidone carboxylic acid mark. In terms of domain architecture, Gla spans Gln-1–Gly-47. Pro-9 is modified (4-hydroxyproline). Ca(2+)-binding residues include Glu-17, Glu-21, Glu-24, and Asp-30. Residues Glu-17, Glu-21, and Glu-24 each carry the 4-carboxyglutamate modification. Cys-23 and Cys-29 form a disulfide bridge.

It belongs to the osteocalcin/matrix Gla protein family. Gamma-carboxyglutamate residues are formed by vitamin K dependent carboxylation by GGCX. These residues are essential for the binding of calcium. Decarboxylation promotes the hormone activity.

It localises to the secreted. Functionally, the carboxylated form is one of the main organic components of the bone matrix, which constitutes 1-2% of the total bone protein: it acts as a negative regulator of bone formation and is required to limit bone formation without impairing bone resorption or mineralization. The carboxylated form binds strongly to apatite and calcium. In terms of biological role, the uncarboxylated form acts as a hormone secreted by osteoblasts, which regulates different cellular processes, such as energy metabolism, male fertility and brain development. Regulates of energy metabolism by acting as a hormone favoring pancreatic beta-cell proliferation, insulin secretion and sensitivity and energy expenditure. Uncarboxylated osteocalcin hormone also promotes testosterone production in the testes: acts as a ligand for G protein-coupled receptor GPRC6A at the surface of Leydig cells, initiating a signaling response that promotes the expression of enzymes required for testosterone synthesis in a CREB-dependent manner. Also acts as a regulator of brain development: osteocalcin hormone crosses the blood-brain barrier and acts as a ligand for GPR158 on neurons, initiating a signaling response that prevents neuronal apoptosis in the hippocampus, favors the synthesis of all monoamine neurotransmitters and inhibits that of gamma-aminobutyric acid (GABA). Osteocalcin also crosses the placenta during pregnancy and maternal osteocalcin is required for fetal brain development. The sequence is that of Osteocalcin (BGLAP) from Oryctolagus cuniculus (Rabbit).